Here is a 503-residue protein sequence, read N- to C-terminus: Lycopene beta cyclase, chloroplastic/chromoplastic (503 aa).

A chloroplast and chromoplast-targeting transit peptide spans 1–85 (MDTLLRTHNR…DLPLYDPSKA (85 aa)). 90 to 117 (LAVVGGGPLARSCSTSLGGGLSVVSIDP) is an NAD(+) binding site.

Belongs to the lycopene cyclase family.

The protein resides in the plastid. It is found in the chloroplast. It localises to the chromoplast. The protein localises to the chromoplast membrane. Its subcellular location is the chloroplast membrane. It catalyses the reaction a carotenoid psi-end group = a carotenoid beta-end derivative. It functions in the pathway carotenoid biosynthesis; beta-carotene biosynthesis. Its pathway is carotenoid biosynthesis; beta-zeacarotene biosynthesis. Catalyzes the double cyclization reaction which converts lycopene to beta-carotene and neurosporene to beta-zeacarotene. The protein is Lycopene beta cyclase, chloroplastic/chromoplastic (LCY1) of Narcissus pseudonarcissus (Daffodil).